Reading from the N-terminus, the 109-residue chain is Cyclic di-AMP receptor A (109 aa).

Thr-21, Phe-25, Thr-28, Gly-35, Phe-36, Leu-37, Asn-41, Gly-47, Glu-92, and Gly-94 together coordinate 3',3'-c-di-AMP.

Homotrimer.

It is found in the cytoplasm. In terms of biological role, binds cyclic di-AMP (c-di-AMP) and is probably involved in c-di-AMP-mediated signaling pathways. In vitro, can also bind cyclic GMP-AMP (3'3'-cGAMP), with lower affinity, but not c-di-GMP or 2'3'-cGAMP. The chain is Cyclic di-AMP receptor A from Bacillus subtilis (strain 168).